Reading from the N-terminus, the 800-residue chain is Phenylalanine--tRNA ligase beta subunit (800 aa).

One can recognise a tRNA-binding domain in the interval 38-147 (GAELKGVVAA…PGTVPGTPIG (110 aa)). The region spanning 401 to 477 (VASPEVRMRW…RTLGYDAIPE (77 aa)) is the B5 domain. Residues aspartate 455, aspartate 461, glutamate 464, and glutamate 465 each coordinate Mg(2+). The region spanning 708 to 799 (PRLPAVLRDV…LRERVGAELR (92 aa)) is the FDX-ACB domain.

It belongs to the phenylalanyl-tRNA synthetase beta subunit family. Type 1 subfamily. Tetramer of two alpha and two beta subunits. Requires Mg(2+) as cofactor.

The protein localises to the cytoplasm. The enzyme catalyses tRNA(Phe) + L-phenylalanine + ATP = L-phenylalanyl-tRNA(Phe) + AMP + diphosphate + H(+). In Anaeromyxobacter dehalogenans (strain 2CP-C), this protein is Phenylalanine--tRNA ligase beta subunit.